The sequence spans 982 residues: Protein phosphatase 1 regulatory subunit 12B (982 aa).

Over residues 1–24 (MAELEHLGGKRAESARMRRAEQLR) the composition is skewed to basic and acidic residues. The segment at 1–50 (MAELEHLGGKRAESARMRRAEQLRRWRGSLTEQEPAERRGAGRQPLTRRG) is disordered. Position 29 is a phosphoserine (Ser29). ANK repeat units lie at residues 57–86 (EDGAVFLAACSSGDTDEVRKLLARGADINT), 90–119 (DGLTALHQACIDENLDMVKFLVENRANVNQ), 123–152 (EGWTPLHAAASCGYLNIAEYFINHGASVGI), 216–245 (SGATALHVAAAKGYSEVLRLLIQAGYELNV), and 249–278 (DGWTPLHAAAHWGVKEACSILAEALCDMDI). Disordered stretches follow at residues 342 to 517 (EETP…RESA), 556 to 579 (RTPHKSQADTTAEKTADNVSSSTP), 606 to 864 (TDSS…EARE), and 918 to 948 (AQQKQEKTSDRSSVLEMEKRERRALERKMSE). The span at 362 to 374 (SEEEEGEDEASES) shows a compositional bias: acidic residues. Residues 375 to 385 (ETEKEADKKPE) are compositionally biased toward basic and acidic residues. Polar residues predominate over residues 389–401 (NHSNSESKSSITE). Positions 411–421 (FSASSARRFSS) are enriched in low complexity. At Thr445 the chain carries Phosphothreonine. The span at 466–478 (SSIYRSSSSPRIS) shows a compositional bias: low complexity. Over residues 482-491 (DNKDKERENK) the composition is skewed to basic and acidic residues. The span at 623–632 (VRDEEAESLR) shows a compositional bias: basic and acidic residues. Basic residues predominate over residues 633-643 (KARSRQARQTR). Position 646 is a phosphothreonine (Thr646). Residues 656–680 (EAERTFSRSRAERQAQEQPREKPTD) show a composition bias toward basic and acidic residues. Residues 731 to 742 (TTPASPSTSRPS) are compositionally biased toward low complexity. The segment covering 743–755 (LYTSSHLLWTNRF) has biased composition (polar residues). The span at 797–807 (ERRRPKERRRG) shows a compositional bias: basic residues. Position 808 is a phosphothreonine (Thr808). The span at 824–836 (EEVKETWHERLSR) shows a compositional bias: basic and acidic residues. Ser839 carries the phosphoserine modification. The span at 840–849 (GGSNPTTSDS) shows a compositional bias: polar residues. Basic and acidic residues-rich tracts occupy residues 850-864 (YGDRASARARREARE), 918-927 (AQQKQEKTSD), and 933-948 (EMEKRERRALERKMSE). Residue Ser947 is modified to Phosphoserine.

PP1 comprises a catalytic subunit, PPP1CA, PPP1CB or PPP1CC, and one or several targeting or regulatory subunits. PPP1R12B mediates binding to myosin. Isoform 3 and isoform 4 bind PPP1R12A, but not isoform 1 of PPP1R12B itself. Binds IL16. In terms of tissue distribution, detected in skeletal muscle, fetal and adult heart, brain, placenta, kidney, spleen, thymus, pancreas and lung. Isoform 3 and isoform 4 are heart specific.

The protein resides in the cytoplasm. The protein localises to the cytoskeleton. It is found in the stress fiber. In terms of biological role, regulates myosin phosphatase activity. Augments Ca(2+) sensitivity of the contractile apparatus. The polypeptide is Protein phosphatase 1 regulatory subunit 12B (PPP1R12B) (Homo sapiens (Human)).